The following is a 118-amino-acid chain: Large ribosomal subunit protein bL19 (118 aa).

It belongs to the bacterial ribosomal protein bL19 family.

Functionally, this protein is located at the 30S-50S ribosomal subunit interface and may play a role in the structure and function of the aminoacyl-tRNA binding site. This chain is Large ribosomal subunit protein bL19, found in Campylobacter lari (strain RM2100 / D67 / ATCC BAA-1060).